A 377-amino-acid polypeptide reads, in one-letter code: dTDP-fucopyranose mutase (377 aa).

FAD-binding positions include serine 12, 31–32 (DD), asparagine 39, 58–59 (HI), arginine 348, and 355–360 (LDMDVC).

Belongs to the UDP-galactopyranose/dTDP-fucopyranose mutase family. The cofactor is FAD.

The catalysed reaction is dTDP-alpha-D-fucose = dTDP-alpha-D-fucofuranose. It functions in the pathway bacterial outer membrane biogenesis; LPS O-antigen biosynthesis. Inhibited by Cu(2+), while other divalent cations such as Ca(2+), Co(2+), Fe(2+) and Mg(2+) have no obvious effects on enzyme activity. Catalyzes the conversion of dTDP-alpha-D-fucopyranose to dTDP-alpha-D-fucofuranose. This is a step in the biosynthesis of D-fucofuranose, a component of E.coli O52 O antigen. This chain is dTDP-fucopyranose mutase (fcf2), found in Escherichia coli.